The chain runs to 710 residues: Polyribonucleotide nucleotidyltransferase (710 aa).

Mg(2+) is bound by residues Asp489 and Asp495. The KH domain occupies 556–615 (PKIDTIKIDVDKIKVVIGKGGETIDKIIAETGVKIDIDDEGNVSIYSSDQAAIDRTKEII). One can recognise an S1 motif domain in the interval 625–693 (GEVYHAKVVR…EKGRVDASMK (69 aa)). A disordered region spans residues 691–710 (SMKALIPRPPKPEKKEEKHD). Over residues 700 to 710 (PKPEKKEEKHD) the composition is skewed to basic and acidic residues.

The protein belongs to the polyribonucleotide nucleotidyltransferase family. It depends on Mg(2+) as a cofactor.

Its subcellular location is the cytoplasm. The enzyme catalyses RNA(n+1) + phosphate = RNA(n) + a ribonucleoside 5'-diphosphate. Involved in mRNA degradation. Catalyzes the phosphorolysis of single-stranded polyribonucleotides processively in the 3'- to 5'-direction. The protein is Polyribonucleotide nucleotidyltransferase of Streptococcus pyogenes serotype M1.